We begin with the raw amino-acid sequence, 303 residues long: Glycine--tRNA ligase alpha subunit (303 aa).

This sequence belongs to the class-II aminoacyl-tRNA synthetase family. Tetramer of two alpha and two beta subunits.

It localises to the cytoplasm. It carries out the reaction tRNA(Gly) + glycine + ATP = glycyl-tRNA(Gly) + AMP + diphosphate. This chain is Glycine--tRNA ligase alpha subunit, found in Streptococcus equi subsp. equi (strain 4047).